A 280-amino-acid chain; its full sequence is Digeranylgeranylglyceryl phosphate synthase (280 aa).

Transmembrane regions (helical) follow at residues Ala-4–Leu-24, Ile-27–Ile-47, Leu-83–Leu-103, Pro-104–Lys-124, Leu-128–Ile-148, Gly-150–Ala-170, Ala-199–Tyr-219, Trp-222–Ile-242, and Lys-260–Leu-280.

The protein belongs to the UbiA prenyltransferase family. DGGGP synthase subfamily. The cofactor is Mg(2+).

The protein resides in the cell membrane. It carries out the reaction sn-3-O-(geranylgeranyl)glycerol 1-phosphate + (2E,6E,10E)-geranylgeranyl diphosphate = 2,3-bis-O-(geranylgeranyl)-sn-glycerol 1-phosphate + diphosphate. It participates in membrane lipid metabolism; glycerophospholipid metabolism. In terms of biological role, prenyltransferase that catalyzes the transfer of the geranylgeranyl moiety of geranylgeranyl diphosphate (GGPP) to the C2 hydroxyl of (S)-3-O-geranylgeranylglyceryl phosphate (GGGP). This reaction is the second ether-bond-formation step in the biosynthesis of archaeal membrane lipids. The polypeptide is Digeranylgeranylglyceryl phosphate synthase (Methanospirillum hungatei JF-1 (strain ATCC 27890 / DSM 864 / NBRC 100397 / JF-1)).